Consider the following 371-residue polypeptide: Cyanide hydratase (371 aa).

Residues 8 to 286 (YKAAAVQAEP…EGLMFVEIDL (279 aa)) form the CN hydrolase domain. Catalysis depends on Glu-48, which acts as the Proton acceptor. Residue Lys-130 is part of the active site. Catalysis depends on Cys-165, which acts as the Nucleophile. Residues 326-356 (DGGIGTYNTQDRVGLNRPLDAPKVDGPSGVS) are disordered.

Belongs to the carbon-nitrogen hydrolase superfamily. Nitrilase family. Oligomer of dimers, forming left-handed helical fibers.

The catalysed reaction is formamide = hydrogen cyanide + H2O. Its function is as follows. Catalyzes the hydration of cyanide to formamide. Degradation of cyanide may be important for plant pathogenic fungi in infection of cyanogenic plants. Can also transform some nitriles like 2-cyanopyridine and fumaronitrile and has a minor activity with 4-cyanophenyl acetonitrile (4-CPA). This Botryotinia fuckeliana (strain T4) (Noble rot fungus) protein is Cyanide hydratase.